The chain runs to 209 residues: Dual specificity protein phosphatase 22 (209 aa).

In terms of domain architecture, Tyrosine-protein phosphatase spans 4–144 (GMNKILPSLF…LEDFGKHDVY (141 aa)). The active-site Phosphocysteine intermediate is cysteine 88. Residues 170–193 (DKHKQQEAAESQSATSSGRQWSSH) form a disordered region. The segment covering 177-193 (AAESQSATSSGRQWSSH) has biased composition (low complexity).

The protein belongs to the protein-tyrosine phosphatase family. Non-receptor class dual specificity subfamily.

The protein resides in the cytoplasm. It localises to the nucleus. It carries out the reaction O-phospho-L-tyrosyl-[protein] + H2O = L-tyrosyl-[protein] + phosphate. It catalyses the reaction O-phospho-L-seryl-[protein] + H2O = L-seryl-[protein] + phosphate. The catalysed reaction is O-phospho-L-threonyl-[protein] + H2O = L-threonyl-[protein] + phosphate. Its function is as follows. Activates the Jnk signaling pathway. Dephosphorylates and deactivates p38 and stress-activated protein kinase/c-Jun N-terminal kinase (SAPK/JNK). The polypeptide is Dual specificity protein phosphatase 22 (dusp22) (Xenopus tropicalis (Western clawed frog)).